Here is a 291-residue protein sequence, read N- to C-terminus: N-acetylmannosamine kinase (291 aa).

Residues 5 to 12 (AIDIGGTK) and 132 to 139 (GVGGGVVS) each bind ATP. 4 residues coordinate Zn(2+): histidine 156, cysteine 166, cysteine 168, and cysteine 173.

This sequence belongs to the ROK (NagC/XylR) family. NanK subfamily. As to quaternary structure, homodimer.

It catalyses the reaction an N-acyl-D-mannosamine + ATP = an N-acyl-D-mannosamine 6-phosphate + ADP + H(+). Its pathway is amino-sugar metabolism; N-acetylneuraminate degradation; D-fructose 6-phosphate from N-acetylneuraminate: step 2/5. Functionally, catalyzes the phosphorylation of N-acetylmannosamine (ManNAc) to ManNAc-6-P. The polypeptide is N-acetylmannosamine kinase (nanK1) (Escherichia coli O6:H1 (strain CFT073 / ATCC 700928 / UPEC)).